Reading from the N-terminus, the 200-residue chain is Small ribosomal subunit protein mS38 (200 aa).

It belongs to the mitochondrion-specific ribosomal protein mS38 family. Component of the mitochondrial ribosome small subunit (28S) which comprises a 12S rRNA and about 30 distinct proteins. Interacts with Aurora-A. As to expression, ubiquitously expressed and especially highly expressed in heart, skeletal muscle and testis.

The protein resides in the mitochondrion matrix. It localises to the nucleus. Functionally, may act as a negative regulator of Aurora-A kinase, by down-regulation through proteasome-dependent degradation. The sequence is that of Small ribosomal subunit protein mS38 (Aurkaip1) from Mus musculus (Mouse).